The primary structure comprises 166 residues: Putative transmembrane protein ORF166 (166 aa).

3 consecutive transmembrane segments (helical) span residues Ile-35 to Leu-55, Pro-60 to Ala-80, and Ile-124 to Asn-144.

It localises to the host membrane. The protein is Putative transmembrane protein ORF166 of Acidianus convivator (ABV).